The following is a 126-amino-acid chain: Protein ApaG (126 aa).

Residues 2-126 (KQLESSIRIE…FRLAAPGLLH (125 aa)) form the ApaG domain.

The protein is Protein ApaG of Shewanella loihica (strain ATCC BAA-1088 / PV-4).